Reading from the N-terminus, the 3948-residue chain is Equisetin synthetase eqxS (3948 aa).

Positions 4–438 (SEPIAVIGSA…GTNAHAIIEA (435 aa)) constitute a Ketosynthase family 3 (KS3) domain. Catalysis depends on for beta-ketoacyl synthase activity residues Cys177, His316, and His358. The malonyl-CoA:ACP transacylase (MAT) domain stretch occupies residues 543-847 (IFTGQGTQWP…DTIEAISEGR (305 aa)). The interval 931-1066 (HPLLGRRCHD…AQIKASLGAP (136 aa)) is N-terminal hotdog fold. Residues 931–1233 (HPLLGRRCHD…MELVPFSPAT (303 aa)) form a dehydratase (DH) domain region. The PKS/mFAS DH domain occupies 931–1235 (HPLLGRRCHD…LVPFSPATPA (305 aa)). Residue His964 is the Proton acceptor; for dehydratase activity of the active site. The C-terminal hotdog fold stretch occupies residues 1081–1235 (LRPVSVDRFY…LVPFSPATPA (155 aa)). Asp1141 serves as the catalytic Proton donor; for dehydratase activity. The methyltransferase (MT) domain stretch occupies residues 1376–1574 (MLQDVYEQGF…GIDTTTPPVH (199 aa)). The segment at 2105-2277 (TFLLVGLTGE…VAASSIDISS (173 aa)) is ketoreductase (KR) domain. Residues 2389–2464 (AIIKESFIVR…DLVDECLDLL (76 aa)) form the Carrier 1 domain. The residue at position 2424 (Ser2424) is an O-(pantetheine 4'-phosphoryl)serine. Positions 2480–2553 (QAAKPTTVIP…NSTDILAPPR (74 aa)) are disordered. Polar residues-rich tracts occupy residues 2487-2505 (VIPQ…QGTS) and 2513-2528 (GSDS…LTSW). Residues 2529-2541 (DRQDSSPPDKSDD) are compositionally biased toward basic and acidic residues. A condensation (C) domain region spans residues 2564–2991 (SYGQAGFWFL…IRGSDKTVDA (428 aa)). An adenylation (A) (KR) domain region spans residues 3026 to 3424 (QVIQDNPDNI…DGLLFCDGRL (399 aa)). The 78-residue stretch at 3540 to 3617 (EILTPSEQRL…AMAGVLEDCG (78 aa)) folds into the Carrier 2 domain. Ser3577 bears the O-(pantetheine 4'-phosphoryl)serine mark. A reductase (RED) domain region spans residues 3653–3870 (LTGSSGYLGR…MPVNEVVEAI (218 aa)).

In the C-terminal section; belongs to the NRP synthetase family.

It catalyses the reaction L-serine + 7 malonyl-CoA + acetyl-CoA + 2 S-adenosyl-L-methionine + ATP + 8 NADPH + 11 H(+) = (5S)-3-[(2E,6R,8E,10E,12E)-2,6-dimethyltetradeca-2,8,10,12-tetraenoyl]-5-(hydroxymethyl)pyrrolidine-2,4-dione + AMP + 2 S-adenosyl-L-homocysteine + 7 CO2 + diphosphate + 8 NADP(+) + 8 CoA + 6 H2O. The protein operates within mycotoxin biosynthesis. Hybrid PKS-NRPS synthetase; part of the gene cluster that mediates the biosynthesis of equisetin, a trans-fused decalin-containing tetramic acid with antimicrobial activity. The PKS module of eqxS together with the enoylreductase eqxC catalyze the formation of the polyketide unit which is then conjugated to L-serine by the condensation domain of the eqxS NRPS module. Activity of the Dieckmann cyclase domain (RED) results in release of the Dieckmann product intermediate. Diels-Alderase eqx3 is involved in endo-selective Diels-Alder cycloaddition to form the decalin ring, leading to the production of N-desmethylequisetin also called trichosetin. Subsequent N-methylation is carried out by eqxD to give equisetin. The polypeptide is Equisetin synthetase eqxS (Fusarium heterosporum).